A 422-amino-acid polypeptide reads, in one-letter code: UPF0229 protein SO_2883 (422 aa).

A disordered region spans residues 60–111 (SEPMFHQGKGGVRDRVHPGNDQFTRGDKIDRPQGGSGGGAGKGDASDSGEGN). Positions 70–90 (GVRDRVHPGNDQFTRGDKIDR) are enriched in basic and acidic residues.

This sequence belongs to the UPF0229 family.

This is UPF0229 protein SO_2883 from Shewanella oneidensis (strain ATCC 700550 / JCM 31522 / CIP 106686 / LMG 19005 / NCIMB 14063 / MR-1).